The following is a 130-amino-acid chain: Mediator of RNA polymerase II transcription subunit 10 (130 aa).

It belongs to the Mediator complex subunit 10 family. Component of the Mediator complex.

Its subcellular location is the nucleus. Its function is as follows. Component of the Mediator complex, a coactivator involved in the regulated transcription of nearly all RNA polymerase II-dependent genes. Mediator functions as a bridge to convey information from gene-specific regulatory proteins to the basal RNA polymerase II transcription machinery. Mediator is recruited to promoters by direct interactions with regulatory proteins and serves as a scaffold for the assembly of a functional preinitiation complex with RNA polymerase II and the general transcription factors. This Anopheles gambiae (African malaria mosquito) protein is Mediator of RNA polymerase II transcription subunit 10 (MED10).